We begin with the raw amino-acid sequence, 295 residues long: Pyridoxal 5'-phosphate synthase subunit PdxS (295 aa).

D25 contributes to the D-ribose 5-phosphate binding site. The active-site Schiff-base intermediate with D-ribose 5-phosphate is the K82. D-ribose 5-phosphate is bound at residue G154. R166 is a binding site for D-glyceraldehyde 3-phosphate. D-ribose 5-phosphate is bound by residues G215 and 236 to 237 (GS).

Belongs to the PdxS/SNZ family. In the presence of PdxT, forms a dodecamer of heterodimers.

The enzyme catalyses aldehydo-D-ribose 5-phosphate + D-glyceraldehyde 3-phosphate + L-glutamine = pyridoxal 5'-phosphate + L-glutamate + phosphate + 3 H2O + H(+). It functions in the pathway cofactor biosynthesis; pyridoxal 5'-phosphate biosynthesis. Catalyzes the formation of pyridoxal 5'-phosphate from ribose 5-phosphate (RBP), glyceraldehyde 3-phosphate (G3P) and ammonia. The ammonia is provided by the PdxT subunit. Can also use ribulose 5-phosphate and dihydroxyacetone phosphate as substrates, resulting from enzyme-catalyzed isomerization of RBP and G3P, respectively. The sequence is that of Pyridoxal 5'-phosphate synthase subunit PdxS from Bacillus cereus (strain G9842).